Reading from the N-terminus, the 921-residue chain is Leucine--tRNA ligase (921 aa).

Residues Pro-80–His-90 carry the 'HIGH' region motif. The 'KMSKS' region motif lies at Lys-667–Ser-671. An ATP-binding site is contributed by Lys-670.

This sequence belongs to the class-I aminoacyl-tRNA synthetase family.

Its subcellular location is the cytoplasm. It carries out the reaction tRNA(Leu) + L-leucine + ATP = L-leucyl-tRNA(Leu) + AMP + diphosphate. This chain is Leucine--tRNA ligase, found in Psychrobacter arcticus (strain DSM 17307 / VKM B-2377 / 273-4).